A 308-amino-acid polypeptide reads, in one-letter code: Ribonuclease Z (308 aa).

Zn(2+) is bound by residues His61, His63, Asp65, His66, His142, Asp211, and His270. Asp65 (proton acceptor) is an active-site residue.

The protein belongs to the RNase Z family. Homodimer. The cofactor is Zn(2+).

The enzyme catalyses Endonucleolytic cleavage of RNA, removing extra 3' nucleotides from tRNA precursor, generating 3' termini of tRNAs. A 3'-hydroxy group is left at the tRNA terminus and a 5'-phosphoryl group is left at the trailer molecule.. Its function is as follows. Zinc phosphodiesterase, which displays some tRNA 3'-processing endonuclease activity. Probably involved in tRNA maturation, by removing a 3'-trailer from precursor tRNA. This is Ribonuclease Z from Clostridium beijerinckii (strain ATCC 51743 / NCIMB 8052) (Clostridium acetobutylicum).